A 201-amino-acid polypeptide reads, in one-letter code: Recombination protein RecR (201 aa).

A C4-type zinc finger spans residues 58–73 (CPECGLLTEEERCGLC). Positions 81–176 (TLLCVVESSA…RTTRIAHGVP (96 aa)) constitute a Toprim domain.

Belongs to the RecR family.

Its function is as follows. May play a role in DNA repair. It seems to be involved in an RecBC-independent recombinational process of DNA repair. It may act with RecF and RecO. The protein is Recombination protein RecR of Halorhodospira halophila (strain DSM 244 / SL1) (Ectothiorhodospira halophila (strain DSM 244 / SL1)).